The chain runs to 37 residues: Large ribosomal subunit protein bL36 (37 aa).

The protein belongs to the bacterial ribosomal protein bL36 family.

The chain is Large ribosomal subunit protein bL36 from Halorhodospira halophila (strain DSM 244 / SL1) (Ectothiorhodospira halophila (strain DSM 244 / SL1)).